A 148-amino-acid polypeptide reads, in one-letter code: Large-conductance mechanosensitive channel (148 aa).

The next 2 membrane-spanning stretches (helical) occupy residues A12–F32 and G85–I105.

This sequence belongs to the MscL family. Homopentamer.

The protein resides in the cell inner membrane. Functionally, channel that opens in response to stretch forces in the membrane lipid bilayer. May participate in the regulation of osmotic pressure changes within the cell. This Bacteroides thetaiotaomicron (strain ATCC 29148 / DSM 2079 / JCM 5827 / CCUG 10774 / NCTC 10582 / VPI-5482 / E50) protein is Large-conductance mechanosensitive channel.